The following is a 109-amino-acid chain: U26-theraphotoxin-Cg1a (109 aa).

Positions 1–18 (MNTIIPLLLLSLLITVYA) are cleaved as a signal peptide. The propeptide occupies 19-67 (YALEDGNKEEIQDIAESEFEASNEMLQLAHLLEADRAETEEDRNSRQKR). 3 disulfide bridges follow: cysteine 68–cysteine 83, cysteine 75–cysteine 88, and cysteine 82–cysteine 103.

It belongs to the neurotoxin 14 (magi-1) family. 07 (Jztx-56) subfamily. As to expression, expressed by the venom gland.

It localises to the secreted. In terms of biological role, probable ion channel inhibitor. This chain is U26-theraphotoxin-Cg1a, found in Chilobrachys guangxiensis (Chinese earth tiger tarantula).